We begin with the raw amino-acid sequence, 98 residues long: MQIELTDAAVTWFKNELELPENNKVLVFFVRYGGEFQLKQGFSPAFTVEPKEDVDIGYEQQYDDLNVVIAEKDLWYFEDDHIIVNVVDHEDEISYSKK.

Belongs to the HesB/IscA family.

This is an uncharacterized protein from Staphylococcus aureus (strain MRSA252).